The chain runs to 210 residues: Sortase A (210 aa).

At 1-5 (MNKQR) the chain is on the cytoplasmic side. The helical transmembrane segment at 6–26 (IYSIVAILLFVVGGVLIGKPF) threads the bilayer. Over 27–210 (YDGYQAEKKQ…GDLVGTKAKK (184 aa)) the chain is Extracellular. The active-site Proton donor/acceptor is H126. C187 serves as the catalytic Acyl-thioester intermediate.

This sequence belongs to the bacterial sortase family. Class A subfamily.

The protein localises to the cell membrane. Its activity is regulated as follows. Inhibited by thiol-reactive reagents. Transpeptidase that anchors surface proteins to the cell wall. Recognizes and modifies its substrate by proteolytic cleavage of a C-terminal sorting signal. Following cleavage, a covalent intermediate is formed via a thioester bond between the sortase and its substrate, which is then transferred and covalently attached to the cell wall. This sortase recognizes a Leu-Pro-x-Thr-Gly (LPXTG) motif, which is cleaved by the sortase between the threonine and glycine residues. Important for growth in macrophages. May be critical in the early stages of inhalation anthrax. In Bacillus anthracis, this protein is Sortase A.